A 248-amino-acid chain; its full sequence is Pyridoxine 5'-phosphate synthase (248 aa).

Position 10 (asparagine 10) interacts with 3-amino-2-oxopropyl phosphate. Residue 12-13 (DH) coordinates 1-deoxy-D-xylulose 5-phosphate. Residue arginine 21 participates in 3-amino-2-oxopropyl phosphate binding. Residue histidine 46 is the Proton acceptor of the active site. 1-deoxy-D-xylulose 5-phosphate-binding residues include arginine 48 and histidine 53. Glutamate 73 (proton acceptor) is an active-site residue. Threonine 103 lines the 1-deoxy-D-xylulose 5-phosphate pocket. The Proton donor role is filled by histidine 194. 3-amino-2-oxopropyl phosphate is bound by residues glycine 195 and 216 to 217 (GH).

Belongs to the PNP synthase family. Homooctamer; tetramer of dimers.

The protein localises to the cytoplasm. The enzyme catalyses 3-amino-2-oxopropyl phosphate + 1-deoxy-D-xylulose 5-phosphate = pyridoxine 5'-phosphate + phosphate + 2 H2O + H(+). It participates in cofactor biosynthesis; pyridoxine 5'-phosphate biosynthesis; pyridoxine 5'-phosphate from D-erythrose 4-phosphate: step 5/5. In terms of biological role, catalyzes the complicated ring closure reaction between the two acyclic compounds 1-deoxy-D-xylulose-5-phosphate (DXP) and 3-amino-2-oxopropyl phosphate (1-amino-acetone-3-phosphate or AAP) to form pyridoxine 5'-phosphate (PNP) and inorganic phosphate. The sequence is that of Pyridoxine 5'-phosphate synthase from Legionella pneumophila (strain Lens).